The following is a 188-amino-acid chain: HTH-type transcriptional repressor AcnR (188 aa).

Positions 10-70 (TNSRQEILEG…ALAREDAARM (61 aa)) constitute an HTH tetR-type domain. Positions 33–52 (TVRRLEEATGKSRGAIFHHF) form a DNA-binding region, H-T-H motif. Residues 79 to 80 (LV), Arg130, and Asn134 contribute to the citrate site. Glu181 serves as a coordination point for Mg(2+). A citrate-binding site is contributed by Arg185.

As to quaternary structure, homodimer.

Its function is as follows. AcnR negatively controls the expression of the aconitase gene acn. Binds to the imperfect inverted repeat in the acn promoter region. This chain is HTH-type transcriptional repressor AcnR, found in Corynebacterium glutamicum (strain ATCC 13032 / DSM 20300 / JCM 1318 / BCRC 11384 / CCUG 27702 / LMG 3730 / NBRC 12168 / NCIMB 10025 / NRRL B-2784 / 534).